A 340-amino-acid polypeptide reads, in one-letter code: Phenylalanine--tRNA ligase alpha subunit (340 aa).

E251 provides a ligand contact to Mg(2+).

Belongs to the class-II aminoacyl-tRNA synthetase family. Phe-tRNA synthetase alpha subunit type 1 subfamily. Tetramer of two alpha and two beta subunits. Mg(2+) is required as a cofactor.

It is found in the cytoplasm. The enzyme catalyses tRNA(Phe) + L-phenylalanine + ATP = L-phenylalanyl-tRNA(Phe) + AMP + diphosphate + H(+). This chain is Phenylalanine--tRNA ligase alpha subunit, found in Porphyromonas gingivalis (strain ATCC 33277 / DSM 20709 / CIP 103683 / JCM 12257 / NCTC 11834 / 2561).